A 1820-amino-acid chain; its full sequence is uncharacterized protein (1820 aa).

9 disordered regions span residues 1 to 73 (MQWT…TLSG), 86 to 158 (TTTT…VRSA), 226 to 260 (GSSG…NNNY), 286 to 366 (EERA…QETE), 453 to 497 (DVQD…RNLS), 519 to 548 (LSSI…TDTA), 577 to 597 (GNSS…PPTP), 619 to 689 (GAGT…TASG), and 735 to 830 (HSHN…TPSS). The segment covering 20–31 (NRNSIEQRTPAN) has biased composition (polar residues). A compositionally biased stretch (low complexity) spans 86–128 (TTTTTIIESSSSTNTTLEKNSPSPAGGSCSSGSGSLSPAYLQH). Basic residues predominate over residues 129 to 146 (HLQHHGSPLHHLQVHHHT). Low complexity predominate over residues 247–259 (SNSSNCSSQFNNN). The stretch at 265–308 (VDSLDDMLRKLTELEQRVIEAEERAEEAEDKVRAMEQRLSEWPK) forms a coiled coil. Residues 294–305 (DKVRAMEQRLSE) show a composition bias toward basic and acidic residues. Residues 346–358 (ASGGATAGAAGSG) show a composition bias toward low complexity. Residues 362–438 (TQETEKTITS…LKNHIANQSQ (77 aa)) are a coiled coil. The span at 453–463 (DVQDFTGSGSN) shows a compositional bias: polar residues. Residues Ser542 and Ser543 each carry the phosphoserine modification. Positions 623–632 (GTSTAESTAS) are enriched in low complexity. Residues 655 to 669 (HGSGTGIGTGDGHGT) are compositionally biased toward gly residues. Residues 738–769 (NSSSTDNTETSTSGSASSPSKSLKTSSSLSPA) are compositionally biased toward low complexity. Residues 787 to 818 (QSRTSTTPSSRINQHLQPSQHQHHTLSNQNHG) are compositionally biased toward polar residues. PH domains are found at residues 909–1003 (SLEK…NVQR) and 1017–1124 (KPTV…VVSG). Residues Ser1073, Ser1075, and Ser1077 each carry the phosphoserine modification. In terms of domain architecture, MyTH4 spans 1159–1378 (HTKDTITAPL…PSRMEVLSIL (220 aa)). The FERM domain maps to 1389–1712 (HAIPVHMMNS…DYMNALGHTV (324 aa)). Disordered stretches follow at residues 1713-1748 (PGTP…ATGF) and 1764-1820 (ATHT…QRIK). Over residues 1714 to 1724 (GTPQMNSLTRN) the composition is skewed to polar residues. A compositionally biased stretch (low complexity) spans 1764-1781 (ATHTLNSNHSHTLSSSHH). Over residues 1805-1820 (HQPDILKSTPDHQRIK) the composition is skewed to basic and acidic residues.

This is an uncharacterized protein from Drosophila melanogaster (Fruit fly).